The following is a 645-amino-acid chain: 1-deoxy-D-xylulose-5-phosphate synthase 2 (645 aa).

Residues His-79 and 120 to 122 (GHS) each bind thiamine diphosphate. Position 151 (Asp-151) interacts with Mg(2+). Residues 152–153 (GS), Asn-180, Tyr-291, and Glu-373 each bind thiamine diphosphate. Position 180 (Asn-180) interacts with Mg(2+).

This sequence belongs to the transketolase family. DXPS subfamily. As to quaternary structure, homodimer. It depends on Mg(2+) as a cofactor. The cofactor is thiamine diphosphate.

The enzyme catalyses D-glyceraldehyde 3-phosphate + pyruvate + H(+) = 1-deoxy-D-xylulose 5-phosphate + CO2. The protein operates within metabolic intermediate biosynthesis; 1-deoxy-D-xylulose 5-phosphate biosynthesis; 1-deoxy-D-xylulose 5-phosphate from D-glyceraldehyde 3-phosphate and pyruvate: step 1/1. Its function is as follows. Catalyzes the acyloin condensation reaction between C atoms 2 and 3 of pyruvate and glyceraldehyde 3-phosphate to yield 1-deoxy-D-xylulose-5-phosphate (DXP). This chain is 1-deoxy-D-xylulose-5-phosphate synthase 2, found in Rhodospirillum rubrum (strain ATCC 11170 / ATH 1.1.1 / DSM 467 / LMG 4362 / NCIMB 8255 / S1).